Reading from the N-terminus, the 194-residue chain is Thymidylate kinase (194 aa).

Position 7-14 (7-14) interacts with ATP; the sequence is GVDCVGKS.

Belongs to the thymidylate kinase family.

The catalysed reaction is dTMP + ATP = dTDP + ADP. In terms of biological role, phosphorylation of dTMP to form dTDP in both de novo and salvage pathways of dTTP synthesis. The protein is Thymidylate kinase of Campylobacter lari (strain RM2100 / D67 / ATCC BAA-1060).